Here is a 117-residue protein sequence, read N- to C-terminus: Ribosome-binding factor A (117 aa).

Belongs to the RbfA family. Monomer. Binds 30S ribosomal subunits, but not 50S ribosomal subunits or 70S ribosomes.

The protein localises to the cytoplasm. Its function is as follows. One of several proteins that assist in the late maturation steps of the functional core of the 30S ribosomal subunit. Associates with free 30S ribosomal subunits (but not with 30S subunits that are part of 70S ribosomes or polysomes). Required for efficient processing of 16S rRNA. May interact with the 5'-terminal helix region of 16S rRNA. The protein is Ribosome-binding factor A of Nitrosomonas eutropha (strain DSM 101675 / C91 / Nm57).